The following is an 855-amino-acid chain: Transcription factor gaf1 (855 aa).

The segment covering 72–112 (KNLTPNGDSNTLTPDTFSDPTAPSSAQSVPPTSSAETTADN) has biased composition (polar residues). Disordered stretches follow at residues 72 to 126 (KNLT…PAYS), 149 to 184 (TSFDESTAKSKKRSIADSHFPDPNAMQRPHDLESQP), 229 to 287 (SHNL…GFPS), 412 to 483 (PNSN…DMFS), 602 to 643 (NKNA…TRTT), and 680 to 768 (KKRN…SQSM). Basic and acidic residues predominate over residues 149–168 (TSFDESTAKSKKRSIADSHF). Ser-150 is modified (phosphoserine). 2 stretches are compositionally biased toward low complexity: residues 240 to 250 (PANSNNSASPN) and 428 to 444 (NSSKSVGQGSSGVDSNQ). Residues 445 to 476 (ENAESFNPSISSHNSAEWASGETTGHSSNSPL) are compositionally biased toward polar residues. Positions 614–623 (AEDKKGDANT) are enriched in basic and acidic residues. Composition is skewed to low complexity over residues 625–643 (RANATNPTPTCTNCQTRTT) and 707–717 (SKSSSAKSTAA). Residues 635–659 (CTNCQTRTTPLWRRSPDGQPLCNAC) form a GATA-type zinc finger. Residues Ser-727 and Ser-729 each carry the phosphoserine modification. Residues 755–767 (QQQSSENESKSQS) are compositionally biased toward low complexity.

It is found in the nucleus. Functionally, transcriptional activator. The protein is Transcription factor gaf1 (gaf1) of Schizosaccharomyces pombe (strain 972 / ATCC 24843) (Fission yeast).